Reading from the N-terminus, the 91-residue chain is Small ribosomal subunit protein bS20 (91 aa).

Basic and acidic residues predominate over residues 1 to 18 (MPLHKSAEKRLRQSERRN). Residues 1–26 (MPLHKSAEKRLRQSERRNARNRSRKK) are disordered.

It belongs to the bacterial ribosomal protein bS20 family.

Its function is as follows. Binds directly to 16S ribosomal RNA. The protein is Small ribosomal subunit protein bS20 of Pelodictyon phaeoclathratiforme (strain DSM 5477 / BU-1).